Reading from the N-terminus, the 249-residue chain is MADARFYFSDARTWRYMVASIEKIIEEGVFVATGEGLSLRALDTSHVAMVDLYYPNTAFIEYDIGGESVEFGVSFDLLSKVLRRARKEDELVLEVEGSRLAVKLKSRGERTFRIPQVVMTYEKLPEPKVSFTVRARMLGSTFREAVRDLEPHSETLTLRALEDALLLVGSSEMATVEIELSQSRGSLLDYEAESQDRASYSIEYFSEMLSAAQAADAVVVSFSEDAPVRVDMEYLGGGRLTFYVSPKIE.

This sequence belongs to the PCNA family. In terms of assembly, homotrimer. The subunits circularize to form a toroid; DNA passes through its center. Replication factor C (RFC) is required to load the toroid on the DNA.

In terms of biological role, sliding clamp subunit that acts as a moving platform for DNA processing. Responsible for tethering the catalytic subunit of DNA polymerase and other proteins to DNA during high-speed replication. In Aeropyrum pernix (strain ATCC 700893 / DSM 11879 / JCM 9820 / NBRC 100138 / K1), this protein is DNA polymerase sliding clamp 3.